The primary structure comprises 152 residues: Transcriptional repressor NrdR (152 aa).

Residues 3–34 (CPKCTSIEDKVIDSRISKEGSTIRRRRECLEC) fold into a zinc finger. In terms of domain architecture, ATP-cone spans 49–139 (IVVIKRDGRR…VYKEFRDVSE (91 aa)).

It belongs to the NrdR family. Zn(2+) serves as cofactor.

Negatively regulates transcription of bacterial ribonucleotide reductase nrd genes and operons by binding to NrdR-boxes. This Opitutus terrae (strain DSM 11246 / JCM 15787 / PB90-1) protein is Transcriptional repressor NrdR.